A 468-amino-acid polypeptide reads, in one-letter code: RUS family member 1 (468 aa).

N-acetylalanine is present on alanine 2. The residue at position 49 (threonine 49) is a Phosphothreonine. A helical transmembrane segment spans residues 247–267 (LLMLPLVSGCPGFSLGCFFFL).

The protein belongs to the RUS1 family.

The protein resides in the membrane. The chain is RUS family member 1 from Homo sapiens (Human).